Consider the following 156-residue polypeptide: Arginine repressor (156 aa).

The protein belongs to the ArgR family.

It localises to the cytoplasm. It participates in amino-acid biosynthesis; L-arginine biosynthesis [regulation]. Its function is as follows. Regulates arginine biosynthesis genes. In Shewanella baltica (strain OS223), this protein is Arginine repressor.